Consider the following 322-residue polypeptide: Ribosomal RNA large subunit methyltransferase F (322 aa).

It belongs to the methyltransferase superfamily. METTL16/RlmF family.

It is found in the cytoplasm. It catalyses the reaction adenosine(1618) in 23S rRNA + S-adenosyl-L-methionine = N(6)-methyladenosine(1618) in 23S rRNA + S-adenosyl-L-homocysteine + H(+). Functionally, specifically methylates the adenine in position 1618 of 23S rRNA. This chain is Ribosomal RNA large subunit methyltransferase F, found in Cytophaga hutchinsonii (strain ATCC 33406 / DSM 1761 / CIP 103989 / NBRC 15051 / NCIMB 9469 / D465).